The chain runs to 310 residues: Methionyl-tRNA formyltransferase (310 aa).

109–112 (SLLP) contacts (6S)-5,6,7,8-tetrahydrofolate.

Belongs to the Fmt family.

It carries out the reaction L-methionyl-tRNA(fMet) + (6R)-10-formyltetrahydrofolate = N-formyl-L-methionyl-tRNA(fMet) + (6S)-5,6,7,8-tetrahydrofolate + H(+). Its function is as follows. Attaches a formyl group to the free amino group of methionyl-tRNA(fMet). The formyl group appears to play a dual role in the initiator identity of N-formylmethionyl-tRNA by promoting its recognition by IF2 and preventing the misappropriation of this tRNA by the elongation apparatus. The protein is Methionyl-tRNA formyltransferase of Staphylococcus epidermidis (strain ATCC 12228 / FDA PCI 1200).